A 288-amino-acid polypeptide reads, in one-letter code: Putative branched-chain-amino-acid aminotransferase (288 aa).

An N6-(pyridoxal phosphate)lysine modification is found at Lys-146.

It belongs to the class-IV pyridoxal-phosphate-dependent aminotransferase family. It depends on pyridoxal 5'-phosphate as a cofactor.

The catalysed reaction is L-leucine + 2-oxoglutarate = 4-methyl-2-oxopentanoate + L-glutamate. It carries out the reaction L-isoleucine + 2-oxoglutarate = (S)-3-methyl-2-oxopentanoate + L-glutamate. It catalyses the reaction L-valine + 2-oxoglutarate = 3-methyl-2-oxobutanoate + L-glutamate. It participates in amino-acid biosynthesis; L-isoleucine biosynthesis; L-isoleucine from 2-oxobutanoate: step 4/4. It functions in the pathway amino-acid biosynthesis; L-leucine biosynthesis; L-leucine from 3-methyl-2-oxobutanoate: step 4/4. The protein operates within amino-acid biosynthesis; L-valine biosynthesis; L-valine from pyruvate: step 4/4. Acts on leucine, isoleucine and valine. This is Putative branched-chain-amino-acid aminotransferase (ilvE) from Methanocaldococcus jannaschii (strain ATCC 43067 / DSM 2661 / JAL-1 / JCM 10045 / NBRC 100440) (Methanococcus jannaschii).